Reading from the N-terminus, the 150-residue chain is Macrodomain Ter protein (150 aa).

This sequence belongs to the MatP family. As to quaternary structure, homodimer.

It is found in the cytoplasm. Its function is as follows. Required for spatial organization of the terminus region of the chromosome (Ter macrodomain) during the cell cycle. Prevents early segregation of duplicated Ter macrodomains during cell division. Binds specifically to matS, which is a 13 bp signature motif repeated within the Ter macrodomain. In Salmonella agona (strain SL483), this protein is Macrodomain Ter protein.